Consider the following 257-residue polypeptide: Hydroxyethylthiazole kinase (257 aa).

Met42 contributes to the substrate binding site. Residues Arg117 and Thr163 each coordinate ATP. Residue Ala190 coordinates substrate.

Belongs to the Thz kinase family. Mg(2+) is required as a cofactor.

It carries out the reaction 5-(2-hydroxyethyl)-4-methylthiazole + ATP = 4-methyl-5-(2-phosphooxyethyl)-thiazole + ADP + H(+). The protein operates within cofactor biosynthesis; thiamine diphosphate biosynthesis; 4-methyl-5-(2-phosphoethyl)-thiazole from 5-(2-hydroxyethyl)-4-methylthiazole: step 1/1. Its function is as follows. Catalyzes the phosphorylation of the hydroxyl group of 4-methyl-5-beta-hydroxyethylthiazole (THZ). The polypeptide is Hydroxyethylthiazole kinase (Roseobacter denitrificans (strain ATCC 33942 / OCh 114) (Erythrobacter sp. (strain OCh 114))).